The primary structure comprises 93 residues: Putative pterin-4-alpha-carbinolamine dehydratase (93 aa).

This sequence belongs to the pterin-4-alpha-carbinolamine dehydratase family.

It catalyses the reaction (4aS,6R)-4a-hydroxy-L-erythro-5,6,7,8-tetrahydrobiopterin = (6R)-L-erythro-6,7-dihydrobiopterin + H2O. This chain is Putative pterin-4-alpha-carbinolamine dehydratase, found in Roseiflexus castenholzii (strain DSM 13941 / HLO8).